A 135-amino-acid polypeptide reads, in one-letter code: ATP synthase epsilon chain, chloroplastic (135 aa).

Belongs to the ATPase epsilon chain family. F-type ATPases have 2 components, CF(1) - the catalytic core - and CF(0) - the membrane proton channel. CF(1) has five subunits: alpha(3), beta(3), gamma(1), delta(1), epsilon(1). CF(0) has three main subunits: a, b and c.

It is found in the plastid. It localises to the chloroplast thylakoid membrane. In terms of biological role, produces ATP from ADP in the presence of a proton gradient across the membrane. The chain is ATP synthase epsilon chain, chloroplastic from Euglena gracilis.